The primary structure comprises 283 residues: Non-selective voltage-gated ion channel VDAC1 (283 aa).

A2 is subject to N-acetylalanine. Residue K12 participates in ATP binding. A Glycyl lysine isopeptide (Lys-Gly) (interchain with G-Cter in ubiquitin) cross-link involves residue K12. A Phosphoserine modification is found at S13. T19 carries the phosphothreonine modification. K20 lines the ATP pocket. N6-acetyllysine; alternate is present on K20. K20 bears the N6-succinyllysine; alternate mark. K20 participates in a covalent cross-link: Glycyl lysine isopeptide (Lys-Gly) (interchain with G-Cter in ubiquitin); alternate. A run of 2 beta stranded transmembrane segments spans residues 26–35 (LIKLDLKTKS) and 39–47 (LEFTSSGSA). Glycyl lysine isopeptide (Lys-Gly) (interchain with G-Cter in ubiquitin) cross-links involve residues K53 and K61. Residues 54 to 64 (VTGSLETKYRW) form a beta stranded membrane-spanning segment. Residue Y67 is modified to Phosphotyrosine. 3 beta stranded membrane-spanning segments follow: residues 69–76 (LTFTEKWN), 80–89 (TLGTEITVED), and 95–104 (LKLTFDSSFS). T107 is modified (phosphothreonine). The residue at position 109 (K109) is an N6-acetyllysine; alternate. K109 is covalently cross-linked (Glycyl lysine isopeptide (Lys-Gly) (interchain with G-Cter in ubiquitin); alternate). K110 participates in a covalent cross-link: Glycyl lysine isopeptide (Lys-Gly) (interchain with G-Cter in ubiquitin). 4 beta stranded membrane passes run 111–120 (NAKIKTGYKR), 123–130 (INLGCDVD), 137–145 (SIRGALVLG), and 150–158 (LAGYQMNFE). K161 participates in a covalent cross-link: Glycyl lysine isopeptide (Lys-Gly) (interchain with G-Cter in ubiquitin). The next 6 membrane-spanning stretches (beta stranded) occupy residues 163 to 175 (RVTQSNFAVGYKT), 178 to 185 (FQLHTNVN), 189 to 198 (EFGGSIYQKV), 202 to 211 (LETAVNLAWT), 218 to 227 (RFGIAAKYQI), and 231 to 238 (ACFSAKVN). S193 is subject to Phosphoserine; by NEK1. At S240 the chain carries Phosphoserine. Position 242–244 (242–244 (LIG)) interacts with NAD(+). Residues 242-251 (LIGLGYTQTL) form a beta stranded membrane-spanning segment. K252 is modified (N6-acetyllysine). A beta stranded membrane pass occupies residues 254-263 (GIKLTLSALL). 260 to 264 (SALLD) is an NAD(+) binding site. K266 carries the post-translational modification N6-acetyllysine; alternate. Residue K266 forms a Glycyl lysine isopeptide (Lys-Gly) (interchain with G-Cter in ubiquitin); alternate linkage. A beta stranded membrane pass occupies residues 273-282 (HKLGLGLEFQ). Residue K274 forms a Glycyl lysine isopeptide (Lys-Gly) (interchain with G-Cter in ubiquitin) linkage.

The protein belongs to the eukaryotic mitochondrial porin family. Homodimer and homotrimer; in response to cyclic AMP or calcium; oligomerization is required for scramblase activity. Component of the mitochondrial permeability transition pore complex (mPTPC), at least composed of SPG7, VDAC1 and PPIF. Interacts with SPG7, NIPSNAP2 and SLC25A30. Interacts with hexokinases including HK1. The HK1-VDAC1 complex interacts with ATF2. Interacts with BCL2L1. Interacts with BAK1. Interacts with RTL10/BOP (via BH3 domain). Interacts with amyloid-beta and APP; induces VDAC1 dephosphorylation. Interacts with TMEM41B. Interacts with BCAP31. Interacts with HSPA9; this interaction couples ITPR1 to VDAC1. In terms of processing, phosphorylation at Ser-193 by NEK1 promotes the closed conformational state preventing excessive mitochondrial membrane permeability and subsequent apoptotic cell death after injury. Phosphorylation by the AKT-GSK3B axis stabilizes the protein probably by preventing ubiquitin-mediated proteasomal degradation. Post-translationally, ubiquitinated. Undergoes monoubiquitination and polyubiquitination by PRKN; monoubiquitination at Lys-274 inhibits apoptosis, whereas polyubiquitination leads to its degradation and promotes mitophagy. Deubiquitinated by USP30. In terms of tissue distribution, predominantly in brain astrocytes.

It localises to the mitochondrion outer membrane. The protein localises to the cell membrane. The protein resides in the membrane raft. The catalysed reaction is chloride(in) = chloride(out). The enzyme catalyses K(+)(in) = K(+)(out). It carries out the reaction ATP(in) = ATP(out). It catalyses the reaction Ca(2+)(in) = Ca(2+)(out). The catalysed reaction is Na(+)(in) = Na(+)(out). The enzyme catalyses Mg(2+)(in) = Mg(2+)(out). It carries out the reaction L-glutamate(out) = L-glutamate(in). It catalyses the reaction dopamine(out) = dopamine(in). The catalysed reaction is acetylcholine(in) = acetylcholine(out). The enzyme catalyses Fe(III)-[cytochrome c](out) = Fe(III)-[cytochrome c](in). It carries out the reaction a 1,2-diacyl-sn-glycero-3-phosphocholine(in) = a 1,2-diacyl-sn-glycero-3-phosphocholine(out). It catalyses the reaction a 1,2-diacyl-sn-glycero-3-phospho-L-serine(in) = a 1,2-diacyl-sn-glycero-3-phospho-L-serine(out). Inhibited by nitric oxide. In terms of biological role, non-selective voltage-gated ion channel that mediates the transport of anions and cations through the mitochondrion outer membrane and plasma membrane. The channel at the outer mitochondrial membrane allows diffusion of small hydrophilic molecules; in the plasma membrane it is involved in cell volume regulation and apoptosis. It adopts an open conformation at low or zero membrane potential and a closed conformation at potentials above 30-40 mV. The open state has a weak anion selectivity whereas the closed state is cation-selective. Binds various signaling molecules, including the sphingolipid ceramide, the phospholipid phosphatidylcholine, and the sterols cholesterol and oxysterol. In depolarized mitochondria, acts downstream of PRKN and PINK1 to promote mitophagy or prevent apoptosis; polyubiquitination by PRKN promotes mitophagy, while monoubiquitination by PRKN decreases mitochondrial calcium influx which ultimately inhibits apoptosis. May participate in the formation of the permeability transition pore complex (PTPC) responsible for the release of mitochondrial products that triggers apoptosis. May mediate ATP export from cells. Part of a complex composed of HSPA9, ITPR1 and VDAC1 that regulates mitochondrial calcium-dependent apoptosis by facilitating calcium transport from the ER lumen to the mitochondria intermembrane space thus providing calcium for the downstream calcium channel MCU that directly releases it into mitochondria matrix. Mediates cytochrome c efflux. Its function is as follows. Catalyzes the scrambling of phospholipids across the outer mitochondrial membrane; the mechanism is unrelated to channel activity and is capable of translocating both anionic and zwitterionic phospholipids. This is Non-selective voltage-gated ion channel VDAC1 from Bos taurus (Bovine).